The following is a 293-amino-acid chain: Nitrogenase iron protein (293 aa).

Position 10-17 (glycine 10–serine 17) interacts with ATP. A [4Fe-4S] cluster-binding site is contributed by cysteine 98. Arginine 101 bears the ADP-ribosylarginine; by dinitrogenase reductase ADP-ribosyltransferase mark. Position 133 (cysteine 133) interacts with [4Fe-4S] cluster.

Belongs to the NifH/BchL/ChlL family. Homodimer. Requires [4Fe-4S] cluster as cofactor. In terms of processing, the reversible ADP-ribosylation of Arg-101 inactivates the nitrogenase reductase and regulates nitrogenase activity.

It catalyses the reaction N2 + 8 reduced [2Fe-2S]-[ferredoxin] + 16 ATP + 16 H2O = H2 + 8 oxidized [2Fe-2S]-[ferredoxin] + 2 NH4(+) + 16 ADP + 16 phosphate + 6 H(+). Its function is as follows. The key enzymatic reactions in nitrogen fixation are catalyzed by the nitrogenase complex, which has 2 components: the iron protein and the molybdenum-iron protein. This is Nitrogenase iron protein from Klebsiella pneumoniae (strain 342).